Here is a 159-residue protein sequence, read N- to C-terminus: Phosphopantetheine adenylyltransferase (159 aa).

Threonine 10 is a binding site for substrate. ATP contacts are provided by residues 10 to 11 (TF) and histidine 18. Residues lysine 42, methionine 74, and arginine 88 each contribute to the substrate site. ATP contacts are provided by residues 89 to 91 (GLR), glutamate 99, and 124 to 130 (WSFISSS).

Belongs to the bacterial CoaD family. As to quaternary structure, homohexamer. The cofactor is Mg(2+).

It localises to the cytoplasm. It carries out the reaction (R)-4'-phosphopantetheine + ATP + H(+) = 3'-dephospho-CoA + diphosphate. The protein operates within cofactor biosynthesis; coenzyme A biosynthesis; CoA from (R)-pantothenate: step 4/5. Functionally, reversibly transfers an adenylyl group from ATP to 4'-phosphopantetheine, yielding dephospho-CoA (dPCoA) and pyrophosphate. The polypeptide is Phosphopantetheine adenylyltransferase (Escherichia coli (strain UTI89 / UPEC)).